A 602-amino-acid polypeptide reads, in one-letter code: Glutamine--fructose-6-phosphate aminotransferase [isomerizing] (602 aa).

Cys2 functions as the Nucleophile; for GATase activity in the catalytic mechanism. The Glutamine amidotransferase type-2 domain maps to 2–222; that stretch reads CGIFGIIFAE…DGEYGYITAG (221 aa). SIS domains are found at residues 284 to 422 and 452 to 592; these read VANA…ALGH and LAKR…PDKP. Lys597 serves as the catalytic For Fru-6P isomerization activity.

In terms of assembly, homodimer.

The protein localises to the cytoplasm. It catalyses the reaction D-fructose 6-phosphate + L-glutamine = D-glucosamine 6-phosphate + L-glutamate. In terms of biological role, catalyzes the first step in hexosamine metabolism, converting fructose-6P into glucosamine-6P using glutamine as a nitrogen source. The polypeptide is Glutamine--fructose-6-phosphate aminotransferase [isomerizing] (Pyrobaculum aerophilum (strain ATCC 51768 / DSM 7523 / JCM 9630 / CIP 104966 / NBRC 100827 / IM2)).